The chain runs to 515 residues: Cytochrome P450 76C3 (515 aa).

A helical transmembrane segment spans residues 5-25; sequence LIQGMSLPLYFLLTLFFFFFA. Cysteine 451 contacts heme.

It belongs to the cytochrome P450 family. The cofactor is heme.

The protein localises to the membrane. The sequence is that of Cytochrome P450 76C3 (CYP76C3) from Arabidopsis thaliana (Mouse-ear cress).